The sequence spans 410 residues: Homeobox protein Hox-A3a (410 aa).

Residues 79–126 (VTDTSDNKQPPTAPSGPSSPSSLNQIPNIDSAAKNPVHVSPTPSTRKH) form a disordered region. The short motif at 127 to 132 (IFPWMK) is the Antp-type hexapeptide element. Positions 163–222 (SKRARTAYTSAQLVELEKEFHFNRYLCRPRRVEMANLLNLTERQIKIWFQNRRMKYKKDQ) form a DNA-binding region, homeobox. A disordered region spans residues 222 to 249 (QKGLGMMPSPGAQSPHSPVSLSSGGGGG).

The protein belongs to the Antp homeobox family.

It is found in the nucleus. Sequence-specific transcription factor which is part of a developmental regulatory system that provides cells with specific positional identities on the anterior-posterior axis. The protein is Homeobox protein Hox-A3a (hoxa3a) of Danio rerio (Zebrafish).